The sequence spans 161 residues: Large ribosomal subunit protein uL15 (161 aa).

The segment at 1–43 is disordered; that stretch reads MKLSEISDNPGARKKRMRIGRGIGSGKGKTGGRGGKGQTARSG. Over residues 21-37 the composition is skewed to gly residues; it reads RGIGSGKGKTGGRGGKG.

The protein belongs to the universal ribosomal protein uL15 family. As to quaternary structure, part of the 50S ribosomal subunit.

Binds to the 23S rRNA. The polypeptide is Large ribosomal subunit protein uL15 (Rhodopseudomonas palustris (strain HaA2)).